Consider the following 125-residue polypeptide: L-fucose mutarotase (125 aa).

The active-site Proton donor is the H13.

Belongs to the RbsD / FucU family. FucU mutarotase subfamily.

The catalysed reaction is alpha-L-fucose = beta-L-fucose. Its activity is regulated as follows. Active toward L-galactopyranoside and D-arabinopyranoside but no D-fucopyranoside activity detected. Its function is as follows. Plays a role in the catabolism of L-fucose. Involved in the anomeric conversion of L-fucose. This chain is L-fucose mutarotase, found in Xanthomonas campestris pv. campestris (strain ATCC 33913 / DSM 3586 / NCPPB 528 / LMG 568 / P 25).